The chain runs to 92 residues: Ferredoxin-like protein in nif region (92 aa).

2 4Fe-4S ferredoxin-type domains span residues 2–28 and 29–65; these read ALKI…SLAG and PHFE…LADG. Residues C9, C12, C15, C19, C38, C41, C50, and C54 each contribute to the [4Fe-4S] cluster site.

It depends on [4Fe-4S] cluster as a cofactor.

In terms of biological role, ferredoxins are iron-sulfur proteins that transfer electrons in a wide variety of metabolic reactions. The chain is Ferredoxin-like protein in nif region from Azotobacter vinelandii.